A 120-amino-acid chain; its full sequence is uncharacterized protein (120 aa).

The helical transmembrane segment at 93-109 threads the bilayer; the sequence is LCVGISTTMIIQVLFLL.

The protein localises to the membrane. This is an uncharacterized protein from Saccharomyces cerevisiae (strain ATCC 204508 / S288c) (Baker's yeast).